The sequence spans 116 residues: NADH-ubiquinone oxidoreductase chain 3 (116 aa).

3 helical membrane passes run 3–23 (LVIS…VVSF), 56–76 (FFLV…LLAL), and 85–105 (ATGT…GLIY).

This sequence belongs to the complex I subunit 3 family.

It is found in the mitochondrion membrane. The enzyme catalyses a ubiquinone + NADH + 5 H(+)(in) = a ubiquinol + NAD(+) + 4 H(+)(out). Its function is as follows. Core subunit of the mitochondrial membrane respiratory chain NADH dehydrogenase (Complex I) that is believed to belong to the minimal assembly required for catalysis. Complex I functions in the transfer of electrons from NADH to the respiratory chain. The immediate electron acceptor for the enzyme is believed to be ubiquinone. This Formosania lacustris (Oriental stream loach) protein is NADH-ubiquinone oxidoreductase chain 3 (MT-ND3).